A 313-amino-acid chain; its full sequence is Adhesin MafA 2 (313 aa).

Positions 1–14 are cleaved as a signal peptide; it reads MKTLLLLIPLVLTA. Cys-15 carries N-palmitoyl cysteine lipidation. The S-diacylglycerol cysteine moiety is linked to residue Cys-15. Positions 282 to 297 are enriched in polar residues; sequence GDTTAQNRPDFKQNNG. The interval 282-313 is disordered; the sequence is GDTTAQNRPDFKQNNGKKPDVGNEVIRRRKGG.

The protein belongs to the MafA family.

It localises to the cell outer membrane. The polypeptide is Adhesin MafA 2 (mafA2) (Neisseria meningitidis serogroup A / serotype 4A (strain DSM 15465 / Z2491)).